The following is a 356-amino-acid chain: Phosphoribosyl pyrophosphate synthase-associated protein 1 (356 aa).

N-acetylmethionine is present on M1. Residues S177 and S215 each carry the phosphoserine modification.

Belongs to the ribose-phosphate pyrophosphokinase family. As to quaternary structure, binds to PRPS1 and PRPS2. As to expression, ubiquitous.

Its function is as follows. Seems to play a negative regulatory role in 5-phosphoribose 1-diphosphate synthesis. In Rattus norvegicus (Rat), this protein is Phosphoribosyl pyrophosphate synthase-associated protein 1 (Prpsap1).